A 201-amino-acid polypeptide reads, in one-letter code: 3-isopropylmalate dehydratase small subunit 1 (201 aa).

The protein belongs to the LeuD family. LeuD type 1 subfamily. Heterodimer of LeuC and LeuD.

It carries out the reaction (2R,3S)-3-isopropylmalate = (2S)-2-isopropylmalate. Its pathway is amino-acid biosynthesis; L-leucine biosynthesis; L-leucine from 3-methyl-2-oxobutanoate: step 2/4. Functionally, catalyzes the isomerization between 2-isopropylmalate and 3-isopropylmalate, via the formation of 2-isopropylmaleate. The chain is 3-isopropylmalate dehydratase small subunit 1 from Salmonella typhimurium (strain LT2 / SGSC1412 / ATCC 700720).